The chain runs to 299 residues: Acetaldehyde dehydrogenase (299 aa).

11-14 (SGNI) contributes to the NAD(+) binding site. Cys-126 acts as the Acyl-thioester intermediate in catalysis. NAD(+) is bound by residues 157 to 165 (SAGPGTRAN) and Asn-267.

This sequence belongs to the acetaldehyde dehydrogenase family.

The enzyme catalyses acetaldehyde + NAD(+) + CoA = acetyl-CoA + NADH + H(+). The sequence is that of Acetaldehyde dehydrogenase from Bacillus cereus (strain ATCC 10987 / NRS 248).